We begin with the raw amino-acid sequence, 71 residues long: Small ribosomal subunit protein bS21 (71 aa).

Belongs to the bacterial ribosomal protein bS21 family.

The chain is Small ribosomal subunit protein bS21 from Alteromonas mediterranea (strain DSM 17117 / CIP 110805 / LMG 28347 / Deep ecotype).